Reading from the N-terminus, the 180-residue chain is UPF0340 protein LL0489 (180 aa).

This sequence belongs to the UPF0340 family.

This Lactococcus lactis subsp. lactis (strain IL1403) (Streptococcus lactis) protein is UPF0340 protein LL0489 (yeiF).